The primary structure comprises 126 residues: C-type natriuretic peptide (126 aa).

An N-terminal signal peptide occupies residues 1-23 (MHLSQLLACALLLTLLSLRPSEA). Residues 19–72 (RPSEAKPGAPPKVPRTPPGEEVAEPQAAGGGQKKGDKTPGGGGANLKGDRSRLL) are disordered. Positions 24-73 (KPGAPPKVPRTPPGEEVAEPQAAGGGQKKGDKTPGGGGANLKGDRSRLLR) are excised as a propeptide. Pro residues predominate over residues 26-35 (GAPPKVPRTP). Residues 46-63 (AGGGQKKGDKTPGGGGAN) show a composition bias toward gly residues. Cys110 and Cys126 form a disulfide bridge.

This sequence belongs to the natriuretic peptide family. Degraded by IDE (in vitro).

Its subcellular location is the secreted. Hormone which plays a role in endochondral ossification through regulation of cartilaginous growth plate chondrocytes proliferation and differentiation. May also be vasoactive and natriuretic. Acts by specifically binding and stimulating NPR2 to produce cGMP. Binds the clearance receptor NPR3. This is C-type natriuretic peptide (NPPC) from Sus scrofa (Pig).